The chain runs to 142 residues: ATP synthase epsilon chain (142 aa).

The protein belongs to the ATPase epsilon chain family. As to quaternary structure, F-type ATPases have 2 components, CF(1) - the catalytic core - and CF(0) - the membrane proton channel. CF(1) has five subunits: alpha(3), beta(3), gamma(1), delta(1), epsilon(1). CF(0) has three main subunits: a, b and c.

Its subcellular location is the cell inner membrane. In terms of biological role, produces ATP from ADP in the presence of a proton gradient across the membrane. The sequence is that of ATP synthase epsilon chain from Shewanella halifaxensis (strain HAW-EB4).